The chain runs to 357 residues: RGG repeats nuclear RNA binding protein C (357 aa).

N-acetylalanine is present on Ala-2. The tract at residues 25–232 (SQKVEKAAAA…AEEAEAREMT (208 aa)) is disordered. The segment covering 31-45 (AAAAVQPPKAAKFPT) has biased composition (low complexity). Composition is skewed to gly residues over residues 63–82 (GGRG…GNGG) and 114–128 (SRGG…GGGR). Positions 143–155 (DVERPPRNYDRHS) are enriched in basic and acidic residues. The span at 159–172 (HGTGMKRNGGGRGN) shows a compositional bias: gly residues. The segment covering 190-232 (EVEKSPVAEKQGGEDETPEAKKELTAEEKAQKEAEEAEAREMT) has biased composition (basic and acidic residues). The region spanning 239–299 (ILEEKKKALQ…KDATEKAKKS (61 aa)) is the FF domain. The tract at residues 308 to 357 (PADGKRYNGRGGGSRGRGGRGGRGEGGNQRYAKEAAAPAIGDTAQFPSLG) is disordered. The span at 316 to 334 (GRGGGSRGRGGRGGRGEGG) shows a compositional bias: gly residues. Phosphoserine is present on Ser-355.

The protein belongs to the SERBP1-HABP4 family.

It localises to the nucleus. It is found in the cytoplasm. The protein resides in the perinuclear region. Its function is as follows. Ribosome-binding protein that acts as a regulator of mRNA translation by promoting ribosome inactivation. Binds RNA. This is RGG repeats nuclear RNA binding protein C from Arabidopsis thaliana (Mouse-ear cress).